The primary structure comprises 91 residues: UPF0298 protein spyM18_0447 (91 aa).

The protein belongs to the UPF0298 family.

The protein localises to the cytoplasm. The sequence is that of UPF0298 protein spyM18_0447 from Streptococcus pyogenes serotype M18 (strain MGAS8232).